Here is a 101-residue protein sequence, read N- to C-terminus: 2-amino-4-ketopentanoate thiolase alpha subunit (101 aa).

Belongs to the OrtA family. Heterodimer with OrtB.

The enzyme catalyses D-alanine + acetyl-CoA = (2R)-2-amino-4-oxopentanoate + CoA. With respect to regulation, completely inhibited by p-chloromercuribenzoate (p-ClHgBzO) and acetyl-CoA, and partially inhibited by N-ethylmaleimide. In terms of biological role, involved in the ornithine fermentation pathway. Catalyzes the thiolytic cleavage of 2-amino-4-ketopentanoate (AKP) with coenzyme A (CoA) to form acetyl-CoA and alanine. It is strictly specific for AKP. This is 2-amino-4-ketopentanoate thiolase alpha subunit from Acetoanaerobium sticklandii (strain ATCC 12662 / DSM 519 / JCM 1433 / CCUG 9281 / NCIMB 10654 / HF) (Clostridium sticklandii).